Consider the following 887-residue polypeptide: Autotaxin (887 aa).

The N-terminal stretch at 1–27 (MARQGCLGSFQVISLFTFAISVNICLG) is a signal peptide. Positions 28-35 (FTASRIKR) are cleaved as a propeptide — removed by furin. Residue Asn53 is glycosylated (N-linked (GlcNAc...) asparagine). SMB domains are found at residues 54–97 (TSGS…LKTA) and 98–142 (RGWE…GESH). Cystine bridges form between Cys58–Cys75, Cys62–Cys93, Cys73–Cys86, Cys79–Cys85, Cys102–Cys119, Cys107–Cys137, Cys117–Cys130, Cys123–Cys129, Cys148–Cys194, and Cys156–Cys350. Residues 126 to 128 (RGD) carry the Cell attachment site motif. The phosphodiesterase stretch occupies residues 144–501 (VDDDCEEIKV…PTFKYRTKVP (358 aa)). Zn(2+)-binding residues include Asp171 and Thr209. Thr209 acts as the Nucleophile in catalysis. Residues Thr209, Asn230, and Asp311 each coordinate 1-(9Z-octadecenoyl)-sn-glycero-3-phosphate. 1-hexadecanoyl-sn-glycero-3-phosphate is bound by residues Thr209, Asn230, and Asp311. The 1-tetradecanoyl-sn-glycerol 3-phosphate site is built by Thr209, Asn230, and Asp311. 4 residues coordinate Zn(2+): Asp311, His315, Asp358, and His359. 5 cysteine pairs are disulfide-bonded: Cys366–Cys468, Cys413–Cys830, Cys566–Cys691, Cys568–Cys676, and Cys799–Cys809. N-linked (GlcNAc...) asparagine glycosylation is found at Asn398 and Asn410. His474 contributes to the Zn(2+) binding site. Position 474 (His474) interacts with 1-(9Z-octadecenoyl)-sn-glycero-3-phosphate. 1-hexadecanoyl-sn-glycero-3-phosphate is bound at residue His474. His474 is a binding site for 1-tetradecanoyl-sn-glycerol 3-phosphate. A glycan (N-linked (GlcNAc...) asparagine) is linked at Asn524. A compositionally biased stretch (basic and acidic residues) spans 586-607 (HTKGSTEAETGKFRGSKHENKK). The interval 586–615 (HTKGSTEAETGKFRGSKHENKKNLNGSVEP) is disordered. An N-linked (GlcNAc...) asparagine glycan is attached at Asn610. The tract at residues 622 to 887 (LYGRPAVLYR…TYLHTYESEI (266 aa)) is nuclease-like domain. Ca(2+) contacts are provided by Asp764, Asn766, Asp768, Leu770, and Asp772. An N-linked (GlcNAc...) asparagine glycan is attached at Asn831. The required for secretion stretch occupies residues 854-875 (IEHLTGLDFYRKTSRSYSEILT).

It belongs to the nucleotide pyrophosphatase/phosphodiesterase family. The cofactor is Zn(2+). Ca(2+) is required as a cofactor. N-glycosylation, but not furin-cleavage, plays a critical role on secretion and on lysoPLD activity. In terms of processing, the interdomain disulfide bond between Cys-413 and Cys-830 is essential for catalytic activity. As to expression, abundantly expressed in cerebrum and cerebellum. Localized in secretory epithelial cells in the brain and the eye including choroid plexus epithelial cells, ciliary epithelial cells, iris pigment epithelial cells, and retinal pigment cells.

The protein resides in the secreted. It carries out the reaction a 1-O-alkyl-sn-glycero-3-phosphoethanolamine + H2O = a 1-O-alkyl-sn-glycero-3-phosphate + ethanolamine + H(+). It catalyses the reaction a 1-acyl-sn-glycero-3-phosphoethanolamine + H2O = a 1-acyl-sn-glycero-3-phosphate + ethanolamine + H(+). The catalysed reaction is 1-(9Z-octadecenoyl)-sn-glycero-3-phosphoethanolamine + H2O = 1-(9Z-octadecenoyl)-sn-glycero-3-phosphate + ethanolamine + H(+). The enzyme catalyses a 1-O-alkyl-sn-glycero-3-phosphocholine + H2O = a 1-O-alkyl-sn-glycero-3-phosphate + choline + H(+). It carries out the reaction 1-O-(9Z-octadecenyl)-sn-glycero-3-phosphocholine + H2O = 1-O-(9Z-octadecenyl)-sn-glycero-3-phosphate + choline + H(+). It catalyses the reaction 1-O-hexadecyl-sn-glycero-3-phosphocholine + H2O = 1-O-hexadecyl-sn-glycero-3-phosphate + choline + H(+). The catalysed reaction is a 1-O-(1Z-alkenyl)-sn-glycero-3-phosphocholine + H2O = a 1-O-(1Z-alkenyl)-sn-glycero-3-phosphate + choline + H(+). The enzyme catalyses a 1-acyl-sn-glycero-3-phosphocholine + H2O = a 1-acyl-sn-glycero-3-phosphate + choline + H(+). It carries out the reaction 1-dodecanoyl-sn-glycero-3-phosphocholine + H2O = 1-dodecanoyl-sn-glycerol 3-phosphate + choline + H(+). It catalyses the reaction 1-(9Z-octadecenoyl)-sn-glycero-3-phosphocholine + H2O = 1-(9Z-octadecenoyl)-sn-glycero-3-phosphate + choline + H(+). The catalysed reaction is 1-tetradecanoyl-sn-glycero-3-phosphocholine + H2O = 1-tetradecanoyl-sn-glycerol 3-phosphate + choline + H(+). The enzyme catalyses 1-decanoyl-sn-glycero-3-phosphocholine + H2O = 1-decanoyl-sn-glycero-3-phosphate + choline + H(+). It carries out the reaction 1-octadecanoyl-sn-glycero-3-phosphocholine + H2O = 1-octadecanoyl-sn-glycero-3-phosphate + choline + H(+). It catalyses the reaction 1-hexadecanoyl-sn-glycero-3-phosphocholine + H2O = 1-hexadecanoyl-sn-glycero-3-phosphate + choline + H(+). The catalysed reaction is 1-hexanoyl-sn-glycero-3-phosphocholine + H2O = 1-hexanoyl-sn-glycero-3-phosphate + choline + H(+). The enzyme catalyses 1-(9Z,12Z)-octadecadienoyl-sn-glycero-3-phosphocholine + H2O = 1-(9Z,12Z)-octadecadienoyl-sn-glycero-3-phosphate + choline + H(+). It carries out the reaction sphing-4-enine-phosphocholine + H2O = sphing-4-enine 1-phosphate + choline + H(+). It catalyses the reaction 1-(5Z,8Z,11Z,14Z-eicosatetraenoyl)-sn-glycero-3-phosphocholine + H2O = 1-(5Z,8Z,11Z,14Z-eicosatetraenoyl)-sn-glycero-3-phosphate + choline + H(+). The catalysed reaction is a 2-acyl-sn-glycero-3-phosphocholine + H2O = a 2-acyl-sn-glycerol 3-phosphate + choline + H(+). The enzyme catalyses a 1,2-diacyl-sn-glycero-3-phosphocholine + H2O = a 1,2-diacyl-sn-glycero-3-phosphate + choline + H(+). It carries out the reaction 1,2-dioctanoyl-sn-glycero-3-phosphocholine + H2O = 1,2-dioctanoyl-sn-glycero-3-phosphate + choline + H(+). It catalyses the reaction 1,2-didecanoyl-sn-glycero-3-phosphocholine + H2O = 1,2-didecanoyl-sn-glycero-3-phosphate + choline + H(+). The catalysed reaction is a 1-acyl-sn-glycero-3-phospho-L-serine + H2O = a 1-acyl-sn-glycero-3-phosphate + L-serine + H(+). The enzyme catalyses 1-(9Z-octadecenoyl)-sn-glycero-3-phospho-L-serine + H2O = 1-(9Z-octadecenoyl)-sn-glycero-3-phosphate + L-serine + H(+). It carries out the reaction a 2-acyl-sn-glycero-3-phospho-L-serine + H2O = a 2-acyl-sn-glycerol 3-phosphate + L-serine + H(+). Its activity is regulated as follows. Inhibited by vanadate. Inhibited by micromolar levels of bile salts, such as tauroursodeoxycholate. Not inhibited by taurodeoxycholate. Not inhibited by hydroxysterols, such as 7-hydroxycholesterol, testosterone, dexamethasone and prednisolone. Inhibited by EDTA and EGTA. Secreted lysophospholipase D that hydrolyzes lysophospholipids to produce the signaling molecule lysophosphatidic acid (LPA) in extracellular fluids. Its major substrate is lysophosphatidylcholine. Can also act on sphingosylphosphorylcholine producing sphingosine-1-phosphate, a modulator of cell motility. Can hydrolyze, in vitro, bis-pNPP, to some extent pNP-TMP, and barely ATP. Involved in several motility-related processes such as angiogenesis and neurite outgrowth. Acts as an angiogenic factor by stimulating migration of smooth muscle cells and microtubule formation. Stimulates migration of melanoma cells, probably via a pertussis toxin-sensitive G protein. May have a role in induction of parturition. Possible involvement in cell proliferation and adipose tissue development. Required for LPA production in activated platelets, cleaves the sn-1 lysophospholipids to generate sn-1 lysophosphatidic acids containing predominantly 18:2 and 20:4 fatty acids. Shows a preference for the sn-1 to the sn-2 isomer of 1-O-alkyl-sn-glycero-3-phosphocholine (lyso-PAF). This chain is Autotaxin, found in Rattus norvegicus (Rat).